The chain runs to 391 residues: MAKGKFERTKPHVNIGTIGHVDHGKTSLTAAITKYFGEYKRYDQIDAAPEEKARGITISTAHVEYETANRHYAHVDCPGHADYVKNMITGAAQMDGAILVVSAADGPMPQTREHILLARQVGVPSIVVFLNKVDQVDDAELLELVELEVRELLSKNEFPGDDIPIVKGSALAALEDSNKTIGEDAIRELMAQVDAYIPTPVRPLDKPFLMPIEDVFSISGRGTVVTGRVERGVVKVGEELEIIGIRPTTKTTCTGVEMFRKLLDQGQAGDNIGALLRGVDREGVERGQVLAKPGTVKPHKKFVAEAYILTKDEGGRHTPFFTNYRPQFYFRTTDVTGIVSLPAGTEMVMPGDNITVDVELIVPIAMEEKLRFAIREGGRTVGAGIVVTIKE.

Residues 10 to 201 (KPHVNIGTIG…QVDAYIPTPV (192 aa)) form the tr-type G domain. Residues 19-26 (GHVDHGKT) are G1. Residue 19 to 26 (GHVDHGKT) coordinates GTP. Threonine 26 is a binding site for Mg(2+). The segment at 55-59 (GITIS) is G2. The tract at residues 76 to 79 (DCPG) is G3. GTP contacts are provided by residues 76–80 (DCPGH) and 131–134 (NKVD). The G4 stretch occupies residues 131 to 134 (NKVD). Residues 169 to 171 (SAL) form a G5 region.

The protein belongs to the TRAFAC class translation factor GTPase superfamily. Classic translation factor GTPase family. EF-Tu/EF-1A subfamily. Monomer.

It localises to the cytoplasm. The catalysed reaction is GTP + H2O = GDP + phosphate + H(+). Its function is as follows. GTP hydrolase that promotes the GTP-dependent binding of aminoacyl-tRNA to the A-site of ribosomes during protein biosynthesis. The sequence is that of Elongation factor Tu from Mesorhizobium japonicum (strain LMG 29417 / CECT 9101 / MAFF 303099) (Mesorhizobium loti (strain MAFF 303099)).